We begin with the raw amino-acid sequence, 283 residues long: Thymidylate synthase (283 aa).

A dUMP-binding site is contributed by arginine 22. Cysteine 160 serves as the catalytic Nucleophile. Residues 180-183 (RSCD), asparagine 191, and 221-223 (HIY) contribute to the dUMP site. A (6R)-5,10-methylene-5,6,7,8-tetrahydrofolate-binding site is contributed by aspartate 183. (6R)-5,10-methylene-5,6,7,8-tetrahydrofolate is bound at residue serine 282.

The protein belongs to the thymidylate synthase family. Bacterial-type ThyA subfamily. Homodimer.

Its subcellular location is the cytoplasm. The enzyme catalyses dUMP + (6R)-5,10-methylene-5,6,7,8-tetrahydrofolate = 7,8-dihydrofolate + dTMP. The protein operates within pyrimidine metabolism; dTTP biosynthesis. In terms of biological role, catalyzes the reductive methylation of 2'-deoxyuridine-5'-monophosphate (dUMP) to 2'-deoxythymidine-5'-monophosphate (dTMP) while utilizing 5,10-methylenetetrahydrofolate (mTHF) as the methyl donor and reductant in the reaction, yielding dihydrofolate (DHF) as a by-product. This enzymatic reaction provides an intracellular de novo source of dTMP, an essential precursor for DNA biosynthesis. The protein is Thymidylate synthase of Haemophilus influenzae (strain PittEE).